The sequence spans 318 residues: Transaldolase (318 aa).

The active-site Schiff-base intermediate with substrate is Lys-126.

The protein belongs to the transaldolase family. Type 1 subfamily. As to quaternary structure, homodimer.

The protein localises to the cytoplasm. It carries out the reaction D-sedoheptulose 7-phosphate + D-glyceraldehyde 3-phosphate = D-erythrose 4-phosphate + beta-D-fructose 6-phosphate. It functions in the pathway carbohydrate degradation; pentose phosphate pathway; D-glyceraldehyde 3-phosphate and beta-D-fructose 6-phosphate from D-ribose 5-phosphate and D-xylulose 5-phosphate (non-oxidative stage): step 2/3. Functionally, transaldolase is important for the balance of metabolites in the pentose-phosphate pathway. In Cupriavidus metallidurans (strain ATCC 43123 / DSM 2839 / NBRC 102507 / CH34) (Ralstonia metallidurans), this protein is Transaldolase.